The primary structure comprises 373 residues: Thyroid hormone receptor beta-A (373 aa).

The segment at 1–18 (MPSSMSGYIPSYLDKDEL) is modulating. 2 consecutive NR C4-type zinc fingers follow at residues 19–39 (CVVC…CEGC) and 57–81 (CKYE…FKKC). Residues 19–93 (CVVCGDKATG…VGMATDLVLD (75 aa)) constitute a DNA-binding region (nuclear receptor). An NR LBD domain is found at 129–373 (EEWELIQVVT…PPLFLEVFED (245 aa)).

It belongs to the nuclear hormone receptor family. NR1 subfamily.

The protein localises to the nucleus. Functionally, high affinity receptor for triiodothyronine (T3). This is Thyroid hormone receptor beta-A (thrb-a) from Xenopus laevis (African clawed frog).